A 344-amino-acid polypeptide reads, in one-letter code: Glyceraldehyde-3-phosphate dehydrogenase (344 aa).

NAD(+)-binding positions include 11–12 (TI) and Gly-110. 139-141 (SCN) contacts D-glyceraldehyde 3-phosphate. Residue Cys-140 is the Nucleophile of the active site. Arg-169 contacts NAD(+). D-glyceraldehyde 3-phosphate is bound at residue 195–196 (HG). Gln-302 is a binding site for NAD(+).

It belongs to the glyceraldehyde-3-phosphate dehydrogenase family. Homotetramer.

It is found in the cytoplasm. The catalysed reaction is D-glyceraldehyde 3-phosphate + phosphate + NADP(+) = (2R)-3-phospho-glyceroyl phosphate + NADPH + H(+). It catalyses the reaction D-glyceraldehyde 3-phosphate + phosphate + NAD(+) = (2R)-3-phospho-glyceroyl phosphate + NADH + H(+). The protein operates within carbohydrate degradation; glycolysis; pyruvate from D-glyceraldehyde 3-phosphate: step 1/5. In Pyrobaculum arsenaticum (strain DSM 13514 / JCM 11321 / PZ6), this protein is Glyceraldehyde-3-phosphate dehydrogenase.